The chain runs to 172 residues: Antibacterial protein PR-39 (172 aa).

The first 29 residues, 1-29 (METQRASLCLGRWSLWLLLLGLVVPSASA), serve as a signal peptide directing secretion. Gln-30 is subject to Pyrrolidone carboxylic acid. The propeptide occupies 30–130 (QALSYREAVL…DISCNEIQSV (101 aa)). Positions 61–80 (DQPPKADEDPGTPKPVSFTV) are disordered. Disulfide bonds link Cys-85–Cys-96 and Cys-107–Cys-124. Residues 130–172 (VRRRPRPPYLPRPRPPPFFPPRLPPRIPPGFPPRFPPRFPGKR) form a disordered region. A compositionally biased stretch (pro residues) spans 136–172 (PPYLPRPRPPPFFPPRLPPRIPPGFPPRFPPRFPGKR). Pro-169 carries the post-translational modification Proline amide.

It belongs to the cathelicidin family. Small intestine and bone marrow.

Its subcellular location is the secreted. Functionally, exerts a potent antimicrobial activity against both E.coli and B.megaterium. The polypeptide is Antibacterial protein PR-39 (PR39) (Sus scrofa (Pig)).